The chain runs to 461 residues: Transforming growth factor beta-1-induced transcript 1 protein (461 aa).

M1 bears the N-acetylmethionine mark. The disordered stretch occupies residues 1–86 (MEDLDALLSD…PPFSSSSGVL (86 aa)). Residues 1–200 (MEDLDALLSD…GCPSPPGQTN (200 aa)) are transcription activation. The tract at residues 1 to 240 (MEDLDALLSD…CNKPIAGQVV (240 aa)) is interaction with PTK2B/PYK2. The short motif at 3–15 (DLDALLSDLETTT) is the LD motif 1 element. T33 is modified (phosphothreonine). Y38 is subject to Phosphotyrosine. Over residues 41-52 (QPQTGSGESSGA) the composition is skewed to polar residues. At Y60 the chain carries Phosphotyrosine; by FAK2 and FYN. S68 is subject to Phosphoserine. A compositionally biased stretch (low complexity) spans 69–83 (PKSVAPVAPPFSSSS). Residues 83-136 (SGVLGNGLCELDRLLQELNATQFNITDEIMSQFPSSKMAEGEGKEDQSEDKSIT) form an interaction with PTK2/FAK1 region. The LD motif 2 motif lies at 92–104 (ELDRLLQELNATQ). A disordered region spans residues 116–154 (PSSKMAEGEGKEDQSEDKSITTVPSSTFPAPSKPSATSA). The span at 121-134 (AEGEGKEDQSEDKS) shows a compositional bias: basic and acidic residues. Polar residues predominate over residues 135–154 (ITTVPSSTFPAPSKPSATSA). Phosphoserine is present on residues S140, S141, S164, and S186. The LD motif 3 motif lies at 157 to 168 (ELDRLMASLSDF). The interval 171-204 (QNHLPASGPPQPPAVSPTREGCPSPPGQTNKGSL) is disordered. The residue at position 188 (T188) is a Phosphothreonine. The residue at position 194 (S194) is a Phosphoserine. Residues 203–215 (SLDTMLGLLQSDL) carry the LD motif 4 motif. 4 LIM zinc-binding domains span residues 226–285 (GLCG…RFSP), 286–343 (RCGF…QLFA), 344–403 (PRCQ…QRGS), and 404–461 (LCAT…KLFG). Phosphoserine is present on S403. Residue T407 is modified to Phosphothreonine.

This sequence belongs to the paxillin family. Homooligomer. Interacts with PPARG. Interacts with TRAF4. Interacts with CRIP2. Interacts with HSPB1. Interacts with ILK. Interacts with LIMS1 and LIMS2. Interacts with NCK2. Interacts with NUDT16L1. Interacts with PAK. Interacts with PTPN12. Interacts with TCF3. Interacts with TCF7L2. Interacts with VCL. Interacts (via LD motif 3) with GIT1. Also interacts with GIT2. Forms a complex with ARHGEF7. Interacts with AR/androgen receptor in a ligand-dependent manner. Interacts with CSK. Interacts with PTK2/FAK1 and PTK2B/PYK2. Interacts with SLC6A3 and SLC6A4. Interacts with NR3C1. Interacts with SMAD3. Interacts with MAPK15. Interacts with SRC. Interacts with LYN. Interacts with talin. Interacts (via LIM zinc-binding domain 2) with CBLC (via RING-type zinc finger); the interaction is direct and enhances CBLC E3 ubiquitin-protein ligase activity. Interacts with PARVA. Interacts with PXN. Post-translationally, phosphorylated by gonadotropin-releasing hormone-activated SRC. As to expression, strongly expressed in large intestine, lung, spleen, testis, uterus and to a lower extent in brain, kidney and liver (at protein level). In brain, expressed by neuronal and non neuronal cells (at protein level).

It localises to the cell junction. It is found in the focal adhesion. Its subcellular location is the nucleus matrix. The protein resides in the cytoplasm. The protein localises to the cytoskeleton. Its function is as follows. Functions as a molecular adapter coordinating multiple protein-protein interactions at the focal adhesion complex and in the nucleus. Links various intracellular signaling modules to plasma membrane receptors and regulates the Wnt and TGFB signaling pathways. May also regulate SLC6A3 and SLC6A4 targeting to the plasma membrane hence regulating their activity. In the nucleus, functions as a nuclear receptor coactivator regulating glucocorticoid, androgen, mineralocorticoid and progesterone receptor transcriptional activity. May play a role in the processes of cell growth, proliferation, migration, differentiation and senescence. May have a zinc-dependent DNA-binding activity. In Rattus norvegicus (Rat), this protein is Transforming growth factor beta-1-induced transcript 1 protein (Tgfb1i1).